The sequence spans 462 residues: MNTPTPTQRTWYRTTIFNVSVVAVCAFIAPGLWAAMNGLGGAGSADPYYVNAANAVIFCLQVVVCVFGSSLIAKIGLKWAFALGMVGFPIYASSVYCNVKYNNSWYIMLACVIDGICSGIFWLTEGAIVLAYPEKHRRGKYLAYWLASRIMGQMIGGAVTLGVNAGNQEEGHISVQTYLVFISIQAIGPFVAATLSPPEKVQRSDQSKVKINLPAGLKAELHAMWKLLGRTEILLLLPMMFQSVFSEAFFSTYNATYFTVRSRALSSLVASTCVIISNFLLGFFLDWRRLSVNTRAMAAFIIIYAFELSLYVYAMVVNKEYERQEPRPLFDWTDDGFGRAVCVYILMLVGFNLMYDYLYWLIGTVNRDGGDIIRLSAVVRGVESAGQAISYGINSVDSFLLSSAVAVNLSFFAACIVPSAFVIYRVGVVNGVKVHHIQQDETLQTSGEGSHDIMDANGKSDD.

Helical transmembrane passes span 16-36 (IFNV…WAAM), 55-75 (AVIF…IAKI), and 79-99 (WAFA…YCNV). Residue asparagine 102 is glycosylated (N-linked (GlcNAc...) asparagine). The next 4 helical transmembrane spans lie at 104 to 124 (SWYI…FWLT), 143 to 163 (AYWL…TLGV), 173 to 193 (ISVQ…FVAA), and 233 to 253 (ILLL…FSTY). An N-linked (GlcNAc...) asparagine glycan is attached at asparagine 254. The next 4 membrane-spanning stretches (helical) occupy residues 265–285 (LSSL…GFFL), 297–317 (MAAF…AMVV), 343–363 (VYIL…WLIG), and 404–424 (AVAV…FVIY). The tract at residues 443 to 462 (LQTSGEGSHDIMDANGKSDD) is disordered. Residues 449–462 (GSHDIMDANGKSDD) show a composition bias toward basic and acidic residues.

It belongs to the unc-93 family.

It localises to the membrane. In terms of biological role, part of the gene cluster that mediates the biosynthesis of notoamide, a fungal indole alkaloid that belongs to a family of natural products containing a characteristic bicyclo[2.2.2]diazaoctane core. The first step of notoamide biosynthesis involves coupling of L-proline and L-tryptophan by the bimodular NRPS notE', to produce cyclo-L-tryptophan-L-proline called brevianamide F. The reverse prenyltransferase notF' then acts as a deoxybrevianamide E synthase and converts brevianamide F to deoxybrevianamide E via reverse prenylation at C-2 of the indole ring leading to the bicyclo[2.2.2]diazaoctane core. Deoxybrevianamide E is further hydroxylated at C-6 of the indole ring, likely catalyzed by the cytochrome P450 monooxygenase notG', to yield 6-hydroxy-deoxybrevianamide E. 6-hydroxy-deoxybrevianamide E is a specific substrate of the prenyltransferase notC' for normal prenylation at C-7 to produce 6-hydroxy-7-prenyl-deoxybrevianamide, also called notoamide S. As the proposed pivotal branching point in notoamide biosynthesis, notoamide S can be diverted to notoamide E through an oxidative pyran ring closure putatively catalyzed by either notH' cytochrome P450 monooxygenase or the notD' FAD-linked oxidoreductase. This step would be followed by an indole 2,3-epoxidation-initiated pinacol-like rearrangement catalyzed by the notB' FAD-dependent monooxygenase leading to the formation of notoamide C and notoamide D. On the other hand notoamide S is converted to notoamide T by notH' (or notD'), a bifunctional oxidase that also functions as the intramolecular Diels-Alderase responsible for generation of (-)-notoamide T. To generate antipodal (+)-notoaminide T, notH (or notD) in Aspergillus strain MF297-2 is expected to catalyze a Diels-Alder reaction leading to the opposite stereochemistry. The remaining oxidoreductase notD' (or notH') likely catalyzes the oxidative pyran ring formation to yield (-)-stephacidin A. The FAD-dependent monooxygenase notI' is highly similar to notB' and is predicted to catalyze a similar conversion from (-)-stephacidin A to (+)-notoamide B via the 2,3-epoxidation of (-)-stephacidin A followed by a pinacol-type rearrangement. Finally, it remains unclear which enzyme could be responsible for the final hydroxylation steps leading to notoamide A and sclerotiamide. The function of notO' in the notoamide biosynthesis has not been determined yet. The chain is Notoamide biosynthesis cluster protein O' from Aspergillus versicolor.